A 1385-amino-acid chain; its full sequence is Probable serine/threonine-protein kinase DDB_G0268876 (1385 aa).

One can recognise a Protein kinase domain in the interval 758-1008 (LELTKEIGRG…QQIITYLENL (251 aa)). ATP-binding positions include 764-772 (IGRGVSGVV) and Lys-785. Asp-878 serves as the catalytic Proton acceptor. Disordered regions lie at residues 1040 to 1074 (GGNSDEHESNIDIDTVSGSNNNESSTAVSLNENKI), 1091 to 1266 (EVSK…SVGG), and 1287 to 1339 (ISSS…NNNN). Positions 1055–1073 (VSGSNNNESSTAVSLNENK) are enriched in polar residues. Residues 1107 to 1144 (SSSTSSSPSTLSAPQSPVGSTSPMGSTSTSPISNNNNR) are compositionally biased toward low complexity. The segment covering 1145–1162 (PTHDHQQPHQVKWERIVP) has biased composition (basic and acidic residues). 3 stretches are compositionally biased toward low complexity: residues 1189–1232 (NNNN…SSGI), 1242–1266 (FLSSGSSLSEQHRSVSNSVSNSVGG), and 1295–1339 (NNNN…NNNN).

Belongs to the protein kinase superfamily. TKL Ser/Thr protein kinase family.

It catalyses the reaction L-seryl-[protein] + ATP = O-phospho-L-seryl-[protein] + ADP + H(+). It carries out the reaction L-threonyl-[protein] + ATP = O-phospho-L-threonyl-[protein] + ADP + H(+). The protein is Probable serine/threonine-protein kinase DDB_G0268876 of Dictyostelium discoideum (Social amoeba).